Reading from the N-terminus, the 82-residue chain is Small ribosomal subunit protein bS16 (82 aa).

The protein belongs to the bacterial ribosomal protein bS16 family.

The polypeptide is Small ribosomal subunit protein bS16 (Aliivibrio fischeri (strain ATCC 700601 / ES114) (Vibrio fischeri)).